We begin with the raw amino-acid sequence, 751 residues long: Large T antigen (751 aa).

M1 is modified (N-acetylmethionine; by host). In terms of domain architecture, J spans 12-75 (ALISLLDLEP…LYRVRLLLGP (64 aa)). Residues 130–134 (LTCQE) are binding to host RB1 protein and transforming activity. The segment covering 133-143 (QEELSSSEDEF) has biased composition (acidic residues). Positions 133–260 (QEELSSSEDE…PKKPPPTVSP (128 aa)) are disordered. Positions 155-165 (VSISSDSSSSS) are enriched in low complexity. Residues 219 to 232 (RESQSTFGSYFNST) show a composition bias toward polar residues. S245 bears the Phosphoserine; by host mark. T249 is subject to Phosphothreonine; by host. The Nuclear localization signal motif lies at 251–257 (PKKPPPT). A DNA-binding region (T-ag OBD) is located at residues 264–380 (PTILRGFLSH…KENKPGLYHF (117 aa)). Residues 389–483 (VKQIDWNFLT…RRLKVLESTR (95 aa)) form a T-ag D1-type zinc finger. Positions 426, 429, 439, and 443 each coordinate Zn(2+). The region spanning 522 to 682 (DFEMMLLDIL…DFLAKSLEEN (161 aa)) is the SF3 helicase domain. 548-555 (GPVNSGKT) provides a ligand contact to ATP.

In terms of assembly, forms homohexamers in the presence of ATP. Interacts with host HDAC1. Interacts (via LXCXE domain) with host RB1; the interaction induces the aberrant dissociation of RB1-E2F1 complex thereby disrupting RB1's activity. Interacts (via LXCXE domain) with host pRB-related proteins RBL1 and RBL2. Interacts (via C-terminus) with host TOP1 and POLA1 allowing DNA replication. Interacts with host preinitiation complex components TBP, TFIIA and TFIID to regulate transcription initiation. Requires Mg(2+) as cofactor. Phosphorylated on both serine and threonine residues. Small t antigen inhibits the dephosphorylation by the AC form of PP2A. Post-translationally, O-Glycosylated near the C-terminal region. In terms of processing, acetylated by CBP in a TP53-dependent manner.

The protein resides in the host nucleus. It carries out the reaction Couples ATP hydrolysis with the unwinding of duplex DNA by translocating in the 3'-5' direction.. It catalyses the reaction ATP + H2O = ADP + phosphate + H(+). Isoform large T antigen is a key early protein essential for both driving viral replication and inducing cellular transformation. Plays a role in viral genome replication by driving entry of quiescent cells into the cell cycle and by autoregulating the synthesis of viral early mRNA. Displays highly oncogenic activities by corrupting the host cellular checkpoint mechanisms that guard cell division and the transcription, replication, and repair of DNA. Participates in the modulation of cellular gene expression preceeding viral DNA replication. This step involves binding to host key cell cycle regulators retinoblastoma protein RB1/pRb and TP53. Induces the disassembly of host E2F1 transcription factors from RB1, thus promoting transcriptional activation of E2F1-regulated S-phase genes. Inhibits host TP53 binding to DNA, abrogating the ability of TP53 to stimulate gene expression. Plays the role of a TFIID-associated factor (TAF) in transcription initiation for all three RNA polymerases, by stabilizing the TBP-TFIIA complex on promoters. Initiates viral DNA replication and unwinding via interactions with the viral origin of replication. Binds two adjacent sites in the SV40 origin. The replication fork movement is facilitated by Large T antigen helicase activity. Has processive 3'-5' DNA helicase activity which requires a short 3' single-stranded region and ATP. Activates the transcription of viral late mRNA, through host TBP and TFIIA stabilization. Interferes with histone deacetylation mediated by HDAC1, leading to activation of transcription. The protein is Large T antigen of Mesocricetus auratus (Golden hamster).